A 231-amino-acid polypeptide reads, in one-letter code: Homeobox protein EMX1 (231 aa).

Positions P133 to K192 form a DNA-binding region, homeobox. The tract at residues L193 to A231 is disordered. The segment covering K203–R212 has biased composition (basic residues).

It belongs to the EMX homeobox family.

The protein localises to the nucleus. In terms of biological role, may function in combinations with OTX1/2 to specify cell fates in the developing central nervous system. In Danio rerio (Zebrafish), this protein is Homeobox protein EMX1 (emx1).